Consider the following 264-residue polypeptide: Small ribosomal subunit protein uS3 (264 aa).

The 69-residue stretch at 39-107 (VREFLKKKLK…PVHVNIEEIR (69 aa)) folds into the KH type-2 domain. Positions 211-264 (NDAPVVEEPQEERRKRPGRPEGRRREGEGRPGGQRRGAGAGGRRSGGADAKTGE) are disordered. The span at 221 to 239 (EERRKRPGRPEGRRREGEG) shows a compositional bias: basic and acidic residues. Residues 240-255 (RPGGQRRGAGAGGRRS) show a composition bias toward gly residues.

Belongs to the universal ribosomal protein uS3 family. In terms of assembly, part of the 30S ribosomal subunit. Forms a tight complex with proteins S10 and S14.

In terms of biological role, binds the lower part of the 30S subunit head. Binds mRNA in the 70S ribosome, positioning it for translation. The protein is Small ribosomal subunit protein uS3 of Ralstonia nicotianae (strain ATCC BAA-1114 / GMI1000) (Ralstonia solanacearum).